Here is a 151-residue protein sequence, read N- to C-terminus: Mini-ribonuclease 3 (151 aa).

Asp30 is an active-site residue.

It belongs to the MrnC RNase family. As to quaternary structure, homodimer. Requires Mg(2+) as cofactor.

It is found in the cytoplasm. Functionally, involved in correct processing of both the 5' and 3' ends of 23S rRNA precursor. Processes 30S rRNA precursor transcript even in absence of ribonuclease 3 (Rnc); Rnc processes 30S rRNA into smaller rRNA precursors. The sequence is that of Mini-ribonuclease 3 from Thermosynechococcus vestitus (strain NIES-2133 / IAM M-273 / BP-1).